Reading from the N-terminus, the 1040-residue chain is Myoblast growth factor receptor egl-15 (1040 aa).

A signal peptide spans 1–19 (MSYFLASCLGVGLLSTVSC). Residues 20-525 (SLQGLTSHYR…PKIDRWTTSD (506 aa)) are Extracellular-facing. An Ig-like C2-type 1 domain is found at 33-125 (PRFKHVANER…GQISRNFTVE (93 aa)). Cys-55 and Cys-109 are disulfide-bonded. Asn-121 carries N-linked (GlcNAc...) asparagine glycosylation. Positions 234–257 (VHDSEESPSESRTEFINADEKENK) are enriched in basic and acidic residues. The disordered stretch occupies residues 234–267 (VHDSEESPSESRTEFINADEKENKEDEEEDYSVS). Residues Asn-280 and Asn-299 are each glycosylated (N-linked (GlcNAc...) asparagine). Ig-like C2-type domains follow at residues 287–383 (PYFK…FHVI) and 391–501 (PPII…ATLT). Cysteines 314 and 367 form a disulfide. Asn-401, Asn-407, Asn-433, Asn-440, Asn-449, Asn-474, and Asn-497 each carry an N-linked (GlcNAc...) asparagine glycan. A disulfide bridge links Cys-414 with Cys-485. Residues 526-549 (YIFTTILLFLLLAATLFGILFMVC) traverse the membrane as a helical segment. Residues 550–1040 (KQTLHKKGFM…NNNSMSKPEF (491 aa)) are Cytoplasmic-facing. One can recognise a Protein kinase domain in the interval 640–931 (LSLVHMLGEG…KTIVDYLDWM (292 aa)). ATP is bound by residues 646 to 654 (LGEGAFGEV) and Lys-672. Catalysis depends on Asp-797, which acts as the Proton acceptor. A Phosphotyrosine; by autocatalysis modification is found at Tyr-828. Disordered regions lie at residues 952-984 (ERST…LPSE) and 1021-1040 (TPET…KPEF). The segment covering 1022 to 1040 (PETSQRIPSNNNSMSKPEF) has biased composition (polar residues).

The protein belongs to the protein kinase superfamily. Tyr protein kinase family. Fibroblast growth factor receptor subfamily. Mg(2+) serves as cofactor. Post-translationally, activity is regulated by the phosphatase clr-1, however it is not known whether clr-1 acts directly on egl-15.

The protein localises to the membrane. It catalyses the reaction L-tyrosyl-[protein] + ATP = O-phospho-L-tyrosyl-[protein] + ADP + H(+). Functionally, receptor tyrosine kinase required for larval development. May phosphorylate adapter protein soc-1 which in turn may result in the recruitment and/or activation of phosphatase ptp-2. May activate the Ras/MAPK kinase signaling pathway which includes sem-5, sos-1, let-60/Ras, lin-45/Raf, mek-2 and mpk-1. Acts in the hypodermis to regulate axon growth and fluid homeostasis. Activates protein degradation in muscles. Probably following interaction with ligand let-756, negatively regulates membrane protrusion from body wall muscles during larval development. Plays a role in nicotinic acetylcholine receptor (nAChR)-mediated sensitivity to nicotine. Regulates synaptic levels of nAChR subunit lev-1 in the nerve cord. Its function is as follows. Affects the maintenance of axon position without affecting axon growth. Interaction with egl-17 is required for the guidance of sex myoblast migration during gonad development. Interaction with let-756 appears to play a role in maintaining body morphology at higher temperatures. The polypeptide is Myoblast growth factor receptor egl-15 (egl-15) (Caenorhabditis elegans).